We begin with the raw amino-acid sequence, 282 residues long: Shikimate dehydrogenase (NADP(+)) (282 aa).

Residues 24–26 and Thr71 contribute to the shikimate site; that span reads SRS. The active-site Proton acceptor is Lys75. Asp87 contributes to the NADP(+) binding site. Shikimate contacts are provided by Asn96 and Asp112. NADP(+)-binding positions include 138–142, 162–167, and Leu227; these read GAGGA and NRTRIR. Tyr229 provides a ligand contact to shikimate. Gly250 lines the NADP(+) pocket.

It belongs to the shikimate dehydrogenase family. As to quaternary structure, homodimer.

It carries out the reaction shikimate + NADP(+) = 3-dehydroshikimate + NADPH + H(+). It participates in metabolic intermediate biosynthesis; chorismate biosynthesis; chorismate from D-erythrose 4-phosphate and phosphoenolpyruvate: step 4/7. In terms of biological role, involved in the biosynthesis of the chorismate, which leads to the biosynthesis of aromatic amino acids. Catalyzes the reversible NADPH linked reduction of 3-dehydroshikimate (DHSA) to yield shikimate (SA). The protein is Shikimate dehydrogenase (NADP(+)) of Paracoccus denitrificans (strain Pd 1222).